We begin with the raw amino-acid sequence, 436 residues long: Nucleolar protein 4-like (436 aa).

The tract at residues 1 to 184 (MSDSTWMSAD…KMNDSEGMDP (184 aa)) is disordered. Positions 41–61 (SESGSGNGSSTLNPSTSSSTQ) are enriched in low complexity. At Ser130 the chain carries Phosphoserine. The segment covering 160 to 169 (ADDDDDDHDD) has biased composition (acidic residues). Positions 170–184 (HEDNDKMNDSEGMDP) are enriched in basic and acidic residues. Ser295 is modified (phosphoserine). The span at 351–366 (QPPASLQTGNHSNGPT) shows a compositional bias: polar residues. The interval 351–400 (QPPASLQTGNHSNGPTDLSMKGGASTTSTTPTPTPSSTSTSRPVPTAQLS) is disordered. Residues 375–396 (STTSTTPTPTPSSTSTSRPVPT) show a composition bias toward low complexity.

The chain is Nucleolar protein 4-like (NOL4L) from Homo sapiens (Human).